Consider the following 99-residue polypeptide: Ferredoxin, heterocyst (99 aa).

The 2Fe-2S ferredoxin-type domain occupies 4–96 (YQVRLINKKQ…NCTIKTHQEP (93 aa)). Residues Cys-42, Cys-47, Cys-50, and Cys-80 each coordinate [2Fe-2S] cluster.

It belongs to the 2Fe2S plant-type ferredoxin family. It depends on [2Fe-2S] cluster as a cofactor.

Functionally, ferredoxins are iron-sulfur proteins that transfer electrons in a wide variety of metabolic reactions. Donates electrons to the nitrogenase. The chain is Ferredoxin, heterocyst (fdxH) from Nostoc sp. (strain PCC 7120 / SAG 25.82 / UTEX 2576).